The primary structure comprises 174 residues: Urease accessory protein UreE (174 aa).

Residues N146–H174 are disordered. Basic and acidic residues predominate over residues H154–H166.

Belongs to the UreE family.

Its subcellular location is the cytoplasm. In terms of biological role, involved in urease metallocenter assembly. Binds nickel. Probably functions as a nickel donor during metallocenter assembly. This chain is Urease accessory protein UreE, found in Albidiferax ferrireducens (strain ATCC BAA-621 / DSM 15236 / T118) (Rhodoferax ferrireducens).